We begin with the raw amino-acid sequence, 342 residues long: Autoinducer 2 import system permease protein LsrC (342 aa).

The Periplasmic segment spans residues methionine 1–alanine 13. A helical transmembrane segment spans residues leucine 14–valine 34. Residues glutamine 35 to threonine 38 lie on the Cytoplasmic side of the membrane. A helical transmembrane segment spans residues methionine 39–leucine 59. Residues threonine 60–serine 69 lie on the Periplasmic side of the membrane. Residues isoleucine 70 to valine 90 form a helical membrane-spanning segment. The Cytoplasmic portion of the chain corresponds to alanine 91 to cysteine 92. The helical transmembrane segment at valine 93–leucine 113 threads the bilayer. Position 114 (lysine 114) is a topological domain, periplasmic. Residues isoleucine 115–tryptophan 135 form a helical membrane-spanning segment. Topologically, residues threonine 136–proline 154 are cytoplasmic. Residues leucine 155 to tryptophan 175 traverse the membrane as a helical segment. The Periplasmic portion of the chain corresponds to leucine 176–serine 212. The chain crosses the membrane as a helical span at residues leucine 213–proline 233. At asparagine 234–glycine 251 the chain is on the cytoplasmic side. Residues glycine 252–leucine 272 form a helical membrane-spanning segment. The Periplasmic segment spans residues threonine 273–arginine 283. Residues isoleucine 284–aspartate 304 traverse the membrane as a helical segment. Residues glycine 305 to alanine 342 are Cytoplasmic-facing.

The protein belongs to the binding-protein-dependent transport system permease family. AraH/RbsC subfamily. In terms of assembly, the complex is composed of two ATP-binding proteins (LsrA), two transmembrane proteins (LsrC and LsrD) and a solute-binding protein (LsrB).

It localises to the cell inner membrane. Its function is as follows. Part of the ABC transporter complex LsrABCD involved in autoinducer 2 (AI-2) import. Probably responsible for the translocation of the substrate across the membrane. The protein is Autoinducer 2 import system permease protein LsrC (lsrC) of Escherichia coli (strain K12 / DH10B).